Reading from the N-terminus, the 674-residue chain is Ribosome biogenesis protein BOP1 homolog (674 aa).

Residues 1–28 (MASTSAATPLKNKRKFENGKKKPKTLKD) form a disordered region. The span at 15-28 (KFENGKKKPKTLKD) shows a compositional bias: basic and acidic residues. 7 WD repeats span residues 342–384 (GHTG…KTFQ), 386–425 (DGEVTSVSFSPVADRTLLAVAYEGKYVAILNTGCGDRLHV), 427–458 (QTEALLAETPTDAQEDGAVVTWRKSKEKLMLK), 459–500 (MPNE…SQCP), 503–541 (KRKGHVQAVTFHPTQARLFVATKIHVREYDLARCVLVKK), 587–626 (HHTAAVRSVAYHKKYPLLATVSDDGTAMVYYARIYTDFVK), and 643–674 (PNDLCMLHTTWHPTQPWLITAGADGTIALFTY).

The protein belongs to the WD repeat BOP1/ERB1 family.

The protein resides in the nucleus. Its subcellular location is the nucleolus. The protein localises to the nucleoplasm. In terms of biological role, required for maturation of ribosomal RNAs and formation of the large ribosomal subunit. The chain is Ribosome biogenesis protein BOP1 homolog from Caenorhabditis elegans.